Consider the following 143-residue polypeptide: 3-hydroxyacyl-[acyl-carrier-protein] dehydratase FabZ (143 aa).

The active site involves histidine 49.

It belongs to the thioester dehydratase family. FabZ subfamily.

Its subcellular location is the cytoplasm. The enzyme catalyses a (3R)-hydroxyacyl-[ACP] = a (2E)-enoyl-[ACP] + H2O. Functionally, involved in unsaturated fatty acids biosynthesis. Catalyzes the dehydration of short chain beta-hydroxyacyl-ACPs and long chain saturated and unsaturated beta-hydroxyacyl-ACPs. The chain is 3-hydroxyacyl-[acyl-carrier-protein] dehydratase FabZ from Wolbachia pipientis wMel.